Consider the following 35-residue polypeptide: Photosystem II reaction center protein T (35 aa).

A helical membrane pass occupies residues 3–23 (ALVYTFLLVSTLGIIFFAIFF).

This sequence belongs to the PsbT family. In terms of assembly, PSII is composed of 1 copy each of membrane proteins PsbA, PsbB, PsbC, PsbD, PsbE, PsbF, PsbH, PsbI, PsbJ, PsbK, PsbL, PsbM, PsbT, PsbY, PsbZ, Psb30/Ycf12, at least 3 peripheral proteins of the oxygen-evolving complex and a large number of cofactors. It forms dimeric complexes.

Its subcellular location is the plastid. The protein localises to the chloroplast thylakoid membrane. In terms of biological role, found at the monomer-monomer interface of the photosystem II (PS II) dimer, plays a role in assembly and dimerization of PSII. PSII is a light-driven water plastoquinone oxidoreductase, using light energy to abstract electrons from H(2)O, generating a proton gradient subsequently used for ATP formation. In Cycas revoluta (Sago palm), this protein is Photosystem II reaction center protein T.